A 386-amino-acid polypeptide reads, in one-letter code: MQMADLEKKLENSVLPPLLKRELSEKILKDGLSEEYLVDEIISETTRAYERTLVEPGEAVGVVAAQSIGEPGTQMTMRTFHYAGVAELNVTLGLPRMIEIVDARKEPSTPTMTIYLNDEFKGDREKASMVAKNIESTNVESVSEDISVDLVNECITIILNSQQLESRGLTVPDVIEAIKSKMKLKIDDHENVLNLKIKTPSLKALRKRLPKVRAIHLKGVQNIKRVIIRKEVDEYILYSEGSNIKEVFDIEGVDTTKTTTNNIVEIQDVLGIEAARNAIIYEMDATLGNQGLTVDKRHLMMVADLMCTDGVVKPIGRHGIGGEKASVLARAAFEETVKHLYSASMRGYVDELGGVVENIIVGKPIAMGTGCIDICIDKTYEEGKEL.

It belongs to the RNA polymerase beta' chain family. Part of the RNA polymerase complex.

The protein localises to the cytoplasm. The catalysed reaction is RNA(n) + a ribonucleoside 5'-triphosphate = RNA(n+1) + diphosphate. Its function is as follows. DNA-dependent RNA polymerase (RNAP) catalyzes the transcription of DNA into RNA using the four ribonucleoside triphosphates as substrates. Forms part of the jaw domain. This is DNA-directed RNA polymerase subunit Rpo1C from Methanococcus maripaludis (strain C5 / ATCC BAA-1333).